Consider the following 562-residue polypeptide: Transmembrane E3 ubiquitin-protein ligase FLY1 (562 aa).

The signal sequence occupies residues 1 to 32 (MKKREHLGLGFFEWQIILWLSIWLAISQQALG). The Lumenal portion of the chain corresponds to 33–262 (LRPIREKPRS…TSVNVEVYYN (230 aa)). Residues 263–283 (KAVNYTLMVTFVSFLQVLLLI) traverse the membrane as a helical segment. Residues 284 to 297 (RQMEHGNTQSGAAK) are Cytoplasmic-facing. Residues 298–318 (VSIVMIGQQAIMDAYLCLLHL) traverse the membrane as a helical segment. The Lumenal segment spans residues 319 to 321 (TAG). A helical transmembrane segment spans residues 322 to 342 (ILVESLFNAFATAAFFKFVVF). Residues 343-373 (SIFEMRYLLAIWKATRPSNSGEGWETMRREL) lie on the Cytoplasmic side of the membrane. The helical transmembrane segment at 374–394 (SFLYSRFYGILLGGILIMYQF) threads the bilayer. Residues 395 to 397 (HNY) are Lumenal-facing. The chain crosses the membrane as a helical span at residues 398-418 (MQPILLLMYSFWIPQIVANVV). Over 419–426 (RDSRKPLH) the chain is Cytoplasmic. Residues 427–447 (PYYILGMTATRLAIPLYVFGC) form a helical membrane-spanning segment. Residues 448 to 458 (PHNFMRVEPNK) are Lumenal-facing. The helical transmembrane segment at 459–479 (VWCICLCTFMGLQAVILLLQH) threads the bilayer. Topologically, residues 480–562 (YFGSRCFVPR…PTCRRSLPPA (83 aa)) are cytoplasmic. An RING-type; atypical zinc finger spans residues 512 to 556 (CVICMTAIDLRQHTSDCMVTPCEHFFHSGCLQRWMDIKMECPTCR).

In terms of tissue distribution, highly expressed in stems. Expressed in root xylem and seed coat.

The protein resides in the endomembrane system. The enzyme catalyses S-ubiquitinyl-[E2 ubiquitin-conjugating enzyme]-L-cysteine + [acceptor protein]-L-lysine = [E2 ubiquitin-conjugating enzyme]-L-cysteine + N(6)-ubiquitinyl-[acceptor protein]-L-lysine.. Its pathway is protein modification; protein ubiquitination. E3 ubiquitin-protein ligase that regulates the degree of methylesterification of pectin in seed mucilage. May be involved in the recycling of pectin methylesterase enzymes in the endomembrane system of seed coat epidermal cells. Possesses E3 ubiquitin-protein ligase activity in vitro when associated with the E1 enzyme UBA1 and the E2 enzyme UBC8. May be involved in xylem development. In Arabidopsis thaliana (Mouse-ear cress), this protein is Transmembrane E3 ubiquitin-protein ligase FLY1.